A 366-amino-acid polypeptide reads, in one-letter code: Inactive protein RESTRICTED TEV MOVEMENT 2 (366 aa).

One can recognise a sHSP domain in the interval 14-121 (VQYEDFVPKS…LPETSRTEAA (108 aa)). An A-1 repeat occupies 129–133 (LEEKR). Positions 129–220 (LEEKRLLEES…LEERRLEERK (92 aa)) are 6 X 5 AA repeats A of L-E-E-[SKR]-[ERK]. Residues 135–139 (LEESR) form an A-2 repeat. Residues 156 to 160 (LEEKE) form an A-3 repeat. The stretch at 163 to 176 (IRKLQEEAKAKEEA) is one B-1 repeat. Residues 163 to 206 (IRKLQEEAKAKEEAEMRKLQEEAKANEEAAAKKLQEEIEAKEKL) form a 3 X 14 AA repeats B of [IMA]-[RK]-K-L-Q-E-E-A-K-A-K-E-[EK]-[LA] region. The B-2 repeat unit spans residues 178–191 (MRKLQEEAKANEEA). Residues 193–205 (AKKLQEEIEAKEK) form a B-3 repeat. Residues 206 to 210 (LEERK) form an A-4 repeat. An A-5 repeat occupies 211–215 (LEERR). The A-6 repeat unit spans residues 216 to 220 (LEERK). A helical transmembrane segment spans residues 322 to 342 (LMMNVGVAALVIFALGAYVSY). A disordered region spans residues 345–366 (CSSSSSSSSSSPSSSSSSTKPE). Positions 346 to 366 (SSSSSSSSSSPSSSSSSTKPE) are enriched in low complexity.

It belongs to the small heat shock protein (HSP20) family.

Its subcellular location is the cell membrane. Seems to not be involved in heat resistance. Unable to mediate restriction of long-distance movement of the pathogenic tobacco etch virus (TEV) without causing a hypersensitive response or inducing systemic acquired resistance. This Arabidopsis thaliana (Mouse-ear cress) protein is Inactive protein RESTRICTED TEV MOVEMENT 2 (RTM2).